A 147-amino-acid polypeptide reads, in one-letter code: uncharacterized protein (147 aa).

The region spanning 44–147 (LVGYIDKEIH…LKSIKERLSI (104 aa)) is the HTH LytTR-type domain.

It localises to the cytoplasm. This is an uncharacterized protein from Staphylococcus aureus (strain MW2).